Here is a 242-residue protein sequence, read N- to C-terminus: Type III pantothenate kinase (242 aa).

5-12 contacts ATP; sequence DLGNTRLK. Residues Y94 and 100–103 each bind substrate; that span reads GCDR. D102 (proton acceptor) is an active-site residue. T124 lines the ATP pocket. T175 serves as a coordination point for substrate.

The protein belongs to the type III pantothenate kinase family. In terms of assembly, homodimer. The cofactor is NH4(+). K(+) is required as a cofactor.

Its subcellular location is the cytoplasm. The enzyme catalyses (R)-pantothenate + ATP = (R)-4'-phosphopantothenate + ADP + H(+). Its pathway is cofactor biosynthesis; coenzyme A biosynthesis; CoA from (R)-pantothenate: step 1/5. Catalyzes the phosphorylation of pantothenate (Pan), the first step in CoA biosynthesis. In Psychrobacter arcticus (strain DSM 17307 / VKM B-2377 / 273-4), this protein is Type III pantothenate kinase.